Consider the following 431-residue polypeptide: tRNA(Ile)-lysidine synthase (431 aa).

Position 25-30 (25-30) interacts with ATP; sequence SGGLDS.

It belongs to the tRNA(Ile)-lysidine synthase family.

The protein resides in the cytoplasm. It carries out the reaction cytidine(34) in tRNA(Ile2) + L-lysine + ATP = lysidine(34) in tRNA(Ile2) + AMP + diphosphate + H(+). In terms of biological role, ligates lysine onto the cytidine present at position 34 of the AUA codon-specific tRNA(Ile) that contains the anticodon CAU, in an ATP-dependent manner. Cytidine is converted to lysidine, thus changing the amino acid specificity of the tRNA from methionine to isoleucine. The polypeptide is tRNA(Ile)-lysidine synthase (Legionella pneumophila (strain Lens)).